The primary structure comprises 378 residues: Cell death-related nuclease 6 (378 aa).

Residues 1–17 form the signal peptide; it reads MIRQIILIVSLIGISNA. 3 N-linked (GlcNAc...) asparagine glycosylation sites follow: Asn51, Asn92, and Asn111.

The protein belongs to the DNase II family.

Functionally, involved in apoptotic DNA degradation. The polypeptide is Cell death-related nuclease 6 (crn-6) (Caenorhabditis elegans).